We begin with the raw amino-acid sequence, 398 residues long: Ribosomal RNA small subunit methyltransferase B (398 aa).

Residues 221–227, Asp-242, Asp-268, and Asp-283 each bind S-adenosyl-L-methionine; that span reads CGGAGLK. Cys-336 acts as the Nucleophile in catalysis.

The protein belongs to the class I-like SAM-binding methyltransferase superfamily. RsmB/NOP family.

It localises to the cytoplasm. The catalysed reaction is cytidine(967) in 16S rRNA + S-adenosyl-L-methionine = 5-methylcytidine(967) in 16S rRNA + S-adenosyl-L-homocysteine + H(+). Its function is as follows. Specifically methylates the cytosine at position 967 (m5C967) of 16S rRNA. The sequence is that of Ribosomal RNA small subunit methyltransferase B from Thermus thermophilus (strain ATCC 27634 / DSM 579 / HB8).